Here is a 433-residue protein sequence, read N- to C-terminus: MPTFVDQTKIEVQAGKGGDGMVAFRHEKYVPNGGPAGGDGGRGGSIIFVADSGLRTLMDFRYRRKFKADNGENGRIKSQYGRGAKDLYLKVPVGTTVYDFNTGELIGDLVEKGQELVVAKGGRGGRGNIHFATSVNTAPEIAENGEPGEDRVLRLELKLLADVGLVGFPSVGKSTLLSVTTKAKPKIAAYQFTTLTPNLGMVILPDGRDFSMADLPGLIEGASQGVGLGIQFLRHVERTKVILHLVSMDPNNGREAIEDYHTIRQELKSYATDLSDKRELIVASQMDIPGADKKLAQFRKDLEKESNDEPVYAISSVTHAGVSKLMNDTATLVEEVEKERVEEPKVVQKTKEYKYKAPQRNEFMVEKVGEHEFVVKGEQLERLVQMTNLDHQDGIMRLARRLKRLGVDDALREKGAVNGDDVAIGKFVFEFVQ.

An Obg domain is found at 2–160 (PTFVDQTKIE…RVLRLELKLL (159 aa)). The OBG-type G domain maps to 161–334 (ADVGLVGFPS…LMNDTATLVE (174 aa)). GTP is bound by residues 167–174 (GFPSVGKS), 192–196 (FTTLT), 214–217 (DLPG), 284–287 (SQMD), and 315–317 (SSV). Residues Ser-174 and Thr-194 each coordinate Mg(2+). In terms of domain architecture, OCT spans 355-433 (YKAPQRNEFM…IGKFVFEFVQ (79 aa)).

Belongs to the TRAFAC class OBG-HflX-like GTPase superfamily. OBG GTPase family. As to quaternary structure, monomer. It depends on Mg(2+) as a cofactor.

The protein localises to the cytoplasm. An essential GTPase which binds GTP, GDP and possibly (p)ppGpp with moderate affinity, with high nucleotide exchange rates and a fairly low GTP hydrolysis rate. Plays a role in control of the cell cycle, stress response, ribosome biogenesis and in those bacteria that undergo differentiation, in morphogenesis control. The protein is GTPase Obg of Lactobacillus acidophilus (strain ATCC 700396 / NCK56 / N2 / NCFM).